The sequence spans 423 residues: Glutamyl-tRNA(Gln) amidotransferase subunit A (423 aa).

Active-site charge relay system residues include Lys28 and Ser103. Residue Ser127 is the Acyl-ester intermediate of the active site.

It belongs to the amidase family. GatA subfamily. As to quaternary structure, heterotrimer of A, B and C subunits.

It catalyses the reaction L-glutamyl-tRNA(Gln) + L-glutamine + ATP + H2O = L-glutaminyl-tRNA(Gln) + L-glutamate + ADP + phosphate + H(+). Its function is as follows. Allows the formation of correctly charged Gln-tRNA(Gln) through the transamidation of misacylated Glu-tRNA(Gln) in organisms which lack glutaminyl-tRNA synthetase. The reaction takes place in the presence of glutamine and ATP through an activated gamma-phospho-Glu-tRNA(Gln). This chain is Glutamyl-tRNA(Gln) amidotransferase subunit A, found in Halobacterium salinarum (strain ATCC 700922 / JCM 11081 / NRC-1) (Halobacterium halobium).